Here is a 98-residue protein sequence, read N- to C-terminus: MPSIFTNIILAFATALLGTLVFRSHLMSSLLCLEGMMLSMFVLSTLIILNMHFTMSFMMPILLLVFAACEAAVGLALLVMVSNTYGLDYIQNLNLLQC.

3 helical membrane passes run 2 to 22, 29 to 49, and 61 to 81; these read PSIF…TLVF, SLLC…LIIL, and ILLL…LVMV.

It belongs to the complex I subunit 4L family. As to quaternary structure, core subunit of respiratory chain NADH dehydrogenase (Complex I) which is composed of 45 different subunits.

It localises to the mitochondrion inner membrane. It carries out the reaction a ubiquinone + NADH + 5 H(+)(in) = a ubiquinol + NAD(+) + 4 H(+)(out). Its function is as follows. Core subunit of the mitochondrial membrane respiratory chain NADH dehydrogenase (Complex I) which catalyzes electron transfer from NADH through the respiratory chain, using ubiquinone as an electron acceptor. Part of the enzyme membrane arm which is embedded in the lipid bilayer and involved in proton translocation. The polypeptide is NADH-ubiquinone oxidoreductase chain 4L (MT-ND4L) (Propithecus diadema diadema (Diademed sifaka)).